A 156-amino-acid chain; its full sequence is Small ribosomal subunit protein uS7 (156 aa).

Belongs to the universal ribosomal protein uS7 family. As to quaternary structure, part of the 30S ribosomal subunit. Contacts proteins S9 and S11.

Functionally, one of the primary rRNA binding proteins, it binds directly to 16S rRNA where it nucleates assembly of the head domain of the 30S subunit. Is located at the subunit interface close to the decoding center, probably blocks exit of the E-site tRNA. This is Small ribosomal subunit protein uS7 from Thermomicrobium roseum (strain ATCC 27502 / DSM 5159 / P-2).